The chain runs to 423 residues: Putative competence-damage inducible protein (423 aa).

It belongs to the CinA family.

The protein is Putative competence-damage inducible protein of Streptococcus pyogenes serotype M49 (strain NZ131).